The chain runs to 177 residues: FMRFamide-like neuropeptides 7 (177 aa).

Residues 1–19 (MLGSRFLLLALGLLVLVLA) form the signal peptide. Residues 20 to 49 (EESAEQQVQEPTELEKSGEQLSEEDLIDEQ) constitute a propeptide that is removed on maturation. Residues 25–106 (QQVQEPTELE…RSSMVRFGKR (82 aa)) are disordered. A phenylalanine amide mark is found at phenylalanine 62, phenylalanine 75, phenylalanine 89, phenylalanine 103, phenylalanine 117, and phenylalanine 130. Leucine 143 is subject to Leucine amide. A Phenylalanine amide modification is found at phenylalanine 157. Positions 161–177 (SMEFEMQSNEKNIEDSE) are excised as a propeptide.

This sequence belongs to the FARP (FMRFamide related peptide) family. In terms of tissue distribution, expressed in the ASI sensory neurons, the ALA interneuron and the AVG interneuron from where secretion occurs. Expression in the ASI neurons is necessary and sufficient to maintain serotonin-induced fat loss.

It is found in the secreted. In terms of biological role, FMRFamide-like neuropeptides. Stimulates serotonin-induced fat loss by binding to and activating the npr-22 receptor which leads to induction of the atgl-1 lipase and subsequent fat loss. Together with atfs-1, negatively regulates the expression of the transcription regulator hlh-11, to promote expression of atgl-1, and thus atgl-1-dependent fat oxidation in response to mitochondrial stress. TPMQRSSMVRF-amide: Acts as a ligand for the npr-22 receptor in vitro. Its function is as follows. SPMQRSSMVRF-amide: Acts as a ligand for the npr-22 receptor in vitro. Functionally, acts as a ligand for the npr-22 receptor in vitro. The polypeptide is FMRFamide-like neuropeptides 7 (Caenorhabditis elegans).